Here is a 234-residue protein sequence, read N- to C-terminus: MSIQITIDGKTLTTEEGRTLVDVAAENGVYIPTLCYLKDKPCLGTCRVCSVKVNGNVAAACTVRVSKGLNVEVNDPELVDMRKALVEFLFAEGNHNCPSCEKSGRCQLQAVGYEVDMMVSRFPYRFPVRVVDHASEKIWLERDRCIFCQRCVEFIRDKASGRKIFSISHRGPESRIEIDAELANAMPPEQVKEAVAICPVGTILEKRVGYDDPIGRRKYEIQSVRARALEGEDK.

In terms of domain architecture, 2Fe-2S ferredoxin-type spans 2–77 (SIQITIDGKT…GLNVEVNDPE (76 aa)). [2Fe-2S] cluster contacts are provided by Cys35, Cys46, Cys49, and Cys61. The 40-residue stretch at 77–116 (ELVDMRKALVEFLFAEGNHNCPSCEKSGRCQLQAVGYEVD) folds into the 4Fe-4S His(Cys)3-ligated-type domain. Residues His95, Cys97, Cys100, Cys106, Cys145, Cys148, Cys151, and Cys198 each contribute to the [4Fe-4S] cluster site.

Belongs to the complex I 75 kDa subunit family. Tetramer of an alpha and a gamma subunits (flavin-containing dimer), and a delta and a nickel-containing beta subunits (hydrogenase dimer). [2Fe-2S] cluster is required as a cofactor. Requires [4Fe-4S] cluster as cofactor.

It localises to the cytoplasm. The enzyme catalyses H2 + NAD(+) = NADH + H(+). Subunits alpha and gamma of HoxS constitute an NADH--oxidoreductase. This Cupriavidus necator (strain ATCC 17699 / DSM 428 / KCTC 22496 / NCIMB 10442 / H16 / Stanier 337) (Ralstonia eutropha) protein is NAD-reducing hydrogenase HoxS subunit gamma (hoxU).